The following is a 246-amino-acid chain: Protein crossbronx (246 aa).

Positions 20-177 (QQEYKILAEY…VQESILESKA (158 aa)) constitute a UBC core domain.

This sequence belongs to the ubiquitin-conjugating enzyme family. FTS subfamily.

In Drosophila grimshawi (Hawaiian fruit fly), this protein is Protein crossbronx (cbx).